The sequence spans 334 residues: Ornithine carbamoyltransferase (334 aa).

Residues 56-59, Q83, R107, and 134-137 contribute to the carbamoyl phosphate site; these read STRT and HPTQ. L-ornithine is bound by residues N168, D232, and 236-237; that span reads SM. Residues 274–275 and R320 contribute to the carbamoyl phosphate site; that span reads CL.

Belongs to the aspartate/ornithine carbamoyltransferase superfamily. OTCase family.

It is found in the cytoplasm. It carries out the reaction carbamoyl phosphate + L-ornithine = L-citrulline + phosphate + H(+). Its pathway is amino-acid biosynthesis; L-arginine biosynthesis; L-arginine from L-ornithine and carbamoyl phosphate: step 1/3. Functionally, reversibly catalyzes the transfer of the carbamoyl group from carbamoyl phosphate (CP) to the N(epsilon) atom of ornithine (ORN) to produce L-citrulline. The protein is Ornithine carbamoyltransferase of Escherichia coli O45:K1 (strain S88 / ExPEC).